Here is a 347-residue protein sequence, read N- to C-terminus: Intracellular hyaluronan-binding protein 4 (347 aa).

Disordered regions lie at residues 39-221 (GTEK…PSET) and 298-347 (FGSL…PALA). 4 stretches are compositionally biased toward basic and acidic residues: residues 61-71 (VKKESQRDRKT), 83-107 (PGHEVVEEPIQRRVTFDRKFNDAEK), 116-125 (RPVDVLDRPA), and 146-174 (DGFDQRGKREFERHSGSDRSSVRSEEKRS). Residues 199-213 (EVTENEETQEAVETD) are compositionally biased toward acidic residues. A compositionally biased stretch (gly residues) spans 307–319 (GGRGGRGGRGRGG). The segment covering 338-347 (DDPEDFPALA) has biased composition (acidic residues).

It belongs to the SERBP1-HABP4 family. Associates with ribosomes; promoting ribosome stabilization. Interacts with eef2/eEF2; promoting ribosome stabilization.

Its subcellular location is the nucleus. It localises to the cytoplasm. It is found in the stress granule. The protein resides in the nucleolus. The protein localises to the nucleus speckle. Its subcellular location is the cajal body. Functionally, ribosome-binding protein that promotes ribosome hibernation, a process during which ribosomes are stabilized in an inactive state and preserved from proteasomal degradation. Acts via its association with eef2/eEF2 factor at the A-site of the ribosome, promoting ribosome stabilization in an inactive state compatible with storage. Plays a key role in ribosome hibernation in the mature egg by promoting ribosome stabilization. Ribosomes, which are produced in large quantities during oogenesis, are stored and translationally repressed in the egg and early embryo. This Danio rerio (Zebrafish) protein is Intracellular hyaluronan-binding protein 4.